We begin with the raw amino-acid sequence, 55 residues long: MYNAPPPQDMSYYEHCQKRHEEKGCLYACIFTALCCFCCYETCECCLDCLCCCCN.

The chain crosses the membrane as a helical span at residues 24–40; it reads GCLYACIFTALCCFCCY.

This sequence belongs to the CYSTM1 family.

The protein resides in the cell membrane. It localises to the secreted. Its subcellular location is the cell wall. In terms of biological role, confers resistance to heavy metal ions (e.g. cadmium (CdCl(2)) and copper (CuCl(2))) by chelating them at the plasma membrane of root cells, thus stopping their entry and reducing their accumulation. This is Protein CADMIUM TOLERANCE 1 from Digitaria ciliaris (Southern crabgrass).